Reading from the N-terminus, the 491-residue chain is MANYFNTLNLRQQLAQLGKCRFMGRDEFADGASYLQGKKVVIVGCGAQGLNQGLNMRDSGLDISYALRKEAIAEKRASWRKATENGFKVGTYEELIPQADLVVNLTPDKQHSDVVRSVQPLMKDGAALGYSHGFNIVEVGEQIRKDITVVMVAPKCPGTEVREEYKRGFGVPTLIAVHPENDPQGEGMAIAKAWAAATGGHRAGVLESSFVAEVKSDLMGEQTILCGMLQAGSLLCFDKLVAEGTDPAYAEKLIQFGWETITEALKQGGITLMMDRLSNPAKLRAYALSEQLKEIMAPLFQKHMDDIISGEFSSGMMADWANDDKKLLTWREETGKTAFETAPQYEGKIGEQEYFDKGVLMIAMVKAGVELAFETMVDSGIIEESAYYESLHELPLIANTIARKRLYEMNVVISDTAEYGNYLFSYACVPLLKPFMAELQPGDLGSAIPEGAVDNAQLRDVNDAIRSHAIEQVGKKLRGYMTDMKRIAVAG.

One can recognise a KARI N-terminal Rossmann domain in the interval 15 to 208 (AQLGKCRFMG…GGHRAGVLES (194 aa)). NADP(+) is bound by residues 45 to 48 (CGAQ), Arg68, Arg76, Ser78, and 108 to 110 (DKQ). His132 is a catalytic residue. Gly158 is an NADP(+) binding site. KARI C-terminal knotted domains are found at residues 209-344 (SFVA…TAPQ) and 345-484 (YEGK…MTDM). Asp217, Glu221, Glu389, and Glu393 together coordinate Mg(2+). Ser414 is a binding site for substrate.

Belongs to the ketol-acid reductoisomerase family. Mg(2+) serves as cofactor.

It carries out the reaction (2R)-2,3-dihydroxy-3-methylbutanoate + NADP(+) = (2S)-2-acetolactate + NADPH + H(+). It catalyses the reaction (2R,3R)-2,3-dihydroxy-3-methylpentanoate + NADP(+) = (S)-2-ethyl-2-hydroxy-3-oxobutanoate + NADPH + H(+). It participates in amino-acid biosynthesis; L-isoleucine biosynthesis; L-isoleucine from 2-oxobutanoate: step 2/4. Its pathway is amino-acid biosynthesis; L-valine biosynthesis; L-valine from pyruvate: step 2/4. In terms of biological role, involved in the biosynthesis of branched-chain amino acids (BCAA). Catalyzes an alkyl-migration followed by a ketol-acid reduction of (S)-2-acetolactate (S2AL) to yield (R)-2,3-dihydroxy-isovalerate. In the isomerase reaction, S2AL is rearranged via a Mg-dependent methyl migration to produce 3-hydroxy-3-methyl-2-ketobutyrate (HMKB). In the reductase reaction, this 2-ketoacid undergoes a metal-dependent reduction by NADPH to yield (R)-2,3-dihydroxy-isovalerate. The protein is Ketol-acid reductoisomerase (NADP(+)) of Salmonella typhimurium (strain LT2 / SGSC1412 / ATCC 700720).